Here is a 963-residue protein sequence, read N- to C-terminus: uncharacterized protein (963 aa).

2 coiled-coil regions span residues 176–236 and 373–467; these read NGRN…HIRM and DYEW…KKTV. A helical membrane pass occupies residues 468-488; it reads IAAGMLFIVLFSLLQQWIPAI. Coiled-coil stretches lie at residues 536–570 and 647–789; these read RNKQ…AEMA and ALHT…LEAS.

It localises to the cell membrane. This is an uncharacterized protein from Bacillus subtilis (strain 168).